Consider the following 220-residue polypeptide: Large ribosomal subunit protein uL3 (220 aa).

The tract at residues 126 to 158 (GFQGAIKRHGQSRGPMSHGSRYHRRPGSMGMAS) is disordered.

Belongs to the universal ribosomal protein uL3 family. In terms of assembly, part of the 50S ribosomal subunit. Forms a cluster with proteins L14 and L19.

One of the primary rRNA binding proteins, it binds directly near the 3'-end of the 23S rRNA, where it nucleates assembly of the 50S subunit. This is Large ribosomal subunit protein uL3 from Macrococcus caseolyticus (strain JCSC5402) (Macrococcoides caseolyticum).